A 531-amino-acid polypeptide reads, in one-letter code: O-phosphoserine--tRNA(Cys) ligase (531 aa).

Residues 189-191 (HMT), 234-236 (SAS), 276-277 (YY), and Asn-319 contribute to the substrate site.

This sequence belongs to the class-II aminoacyl-tRNA synthetase family. O-phosphoseryl-tRNA(Cys) synthetase subfamily. Homotetramer. Interacts with SepCysS.

The enzyme catalyses tRNA(Cys) + O-phospho-L-serine + ATP = O-phospho-L-seryl-tRNA(Cys) + AMP + diphosphate. Functionally, catalyzes the attachment of O-phosphoserine (Sep) to tRNA(Cys). The protein is O-phosphoserine--tRNA(Cys) ligase of Methanoculleus marisnigri (strain ATCC 35101 / DSM 1498 / JR1).